Consider the following 93-residue polypeptide: UPF0250 protein PSPA7_1111 (93 aa).

The protein belongs to the UPF0250 family.

This Pseudomonas paraeruginosa (strain DSM 24068 / PA7) (Pseudomonas aeruginosa (strain PA7)) protein is UPF0250 protein PSPA7_1111.